The following is a 102-amino-acid chain: Small ribosomal subunit protein uS10 (102 aa).

It belongs to the universal ribosomal protein uS10 family. In terms of assembly, part of the 30S ribosomal subunit.

Its function is as follows. Involved in the binding of tRNA to the ribosomes. This Allorhizobium ampelinum (strain ATCC BAA-846 / DSM 112012 / S4) (Agrobacterium vitis (strain S4)) protein is Small ribosomal subunit protein uS10.